A 340-amino-acid polypeptide reads, in one-letter code: Probable glucan endo-1,3-beta-glucosidase BG1 (340 aa).

The N-terminal stretch at 1 to 25 (MDLRFLASLTLLLGLFFVNTNPTGG) is a signal peptide. Glu120 acts as the Proton donor in catalysis. Residue Glu262 is the Nucleophile of the active site.

The protein belongs to the glycosyl hydrolase 17 family.

The protein localises to the secreted. The enzyme catalyses Hydrolysis of (1-&gt;3)-beta-D-glucosidic linkages in (1-&gt;3)-beta-D-glucans.. In terms of biological role, may play a role in plant defense against pathogens. This chain is Probable glucan endo-1,3-beta-glucosidase BG1, found in Arabidopsis thaliana (Mouse-ear cress).